The primary structure comprises 89 residues: Putative membrane protein insertion efficiency factor (89 aa).

Residues 69–89 form a disordered region; that stretch reads DPVPPAHTERGGTMCPSRLPE.

This sequence belongs to the UPF0161 family.

It localises to the cell inner membrane. Its function is as follows. Could be involved in insertion of integral membrane proteins into the membrane. The polypeptide is Putative membrane protein insertion efficiency factor (Paramagnetospirillum magneticum (strain ATCC 700264 / AMB-1) (Magnetospirillum magneticum)).